Reading from the N-terminus, the 451-residue chain is UDP-N-acetylmuramate--L-alanine ligase (451 aa).

110–116 (GTHGKTT) contacts ATP.

It belongs to the MurCDEF family.

The protein localises to the cytoplasm. The enzyme catalyses UDP-N-acetyl-alpha-D-muramate + L-alanine + ATP = UDP-N-acetyl-alpha-D-muramoyl-L-alanine + ADP + phosphate + H(+). It functions in the pathway cell wall biogenesis; peptidoglycan biosynthesis. Functionally, cell wall formation. This chain is UDP-N-acetylmuramate--L-alanine ligase, found in Francisella tularensis subsp. tularensis (strain WY96-3418).